A 259-amino-acid polypeptide reads, in one-letter code: Cytosolic Fe-S cluster assembly factor Nubp2 homolog (259 aa).

An ATP-binding site is contributed by Gly-14–Ser-21. 2 residues coordinate [4Fe-4S] cluster: Cys-188 and Cys-191.

It belongs to the Mrp/NBP35 ATP-binding proteins family. NUBP2/CFD1 subfamily. Heterotetramer of 2 Nubp1 and 2 Nubp2 chains. Requires [4Fe-4S] cluster as cofactor.

The protein resides in the cytoplasm. Component of the cytosolic iron-sulfur (Fe/S) protein assembly (CIA) machinery. Required for maturation of extramitochondrial Fe-S proteins. The Nubp1-Nubp2 heterotetramer forms a Fe-S scaffold complex, mediating the de novo assembly of an Fe-S cluster and its transfer to target apoproteins. This Aedes aegypti (Yellowfever mosquito) protein is Cytosolic Fe-S cluster assembly factor Nubp2 homolog.